A 151-amino-acid chain; its full sequence is HTH-type transcriptional regulator TcaR (151 aa).

The HTH marR-type domain maps to 1 to 142 (MVKHLQDHIQ…VRQVLEVINH (142 aa)). Positions 54-77 (ISEITQRQGVNKAAVSRRIKKLID) form a DNA-binding region, H-T-H motif.

Its function is as follows. Involved in the antibiotic teicoplanin susceptibility. Inactivation of the tcaRAB operon leads to teicoplanin resistance. Is a weak negative regulator of transcription of the icaABD operon. This Staphylococcus aureus (strain COL) protein is HTH-type transcriptional regulator TcaR (tcaR).